Consider the following 414-residue polypeptide: 3-oxo-isoapionate-4-phosphate transcarboxylase/hydrolase (414 aa).

Residues K180, D182, and E183 each coordinate Mg(2+). At K180 the chain carries N6-carboxylysine.

Belongs to the RuBisCO large chain family. The cofactor is Mg(2+).

It carries out the reaction 3-oxoisoapionate 4-phosphate + H2O = (2R)-3-phosphoglycerate + glycolate + H(+). The protein operates within carbohydrate metabolism. Its function is as follows. Involved in catabolism of D-apiose. Catalyzes the conversion of 3-oxo-isoapionate 4-phosphate to 3-phosphoglycerate and glycolate. The protein is 3-oxo-isoapionate-4-phosphate transcarboxylase/hydrolase of Xanthobacter autotrophicus (strain ATCC BAA-1158 / Py2).